Consider the following 312-residue polypeptide: Olfactory receptor 4F6 (312 aa).

Residues 1 to 25 (MDEANHSVVSEFVFLGLSDSRKIQL) are Extracellular-facing. Asparagine 5 is a glycosylation site (N-linked (GlcNAc...) asparagine). A helical membrane pass occupies residues 26–49 (LLFLFFSVFYVSSLMGNLLIVLTV). Residues 50–57 (TSDPRLQS) lie on the Cytoplasmic side of the membrane. Residues 58 to 79 (PMYFLLANLSIINLVFCSSTAP) traverse the membrane as a helical segment. The Extracellular segment spans residues 80–100 (KMIYDLFRKHKTISFGGCVVQ). A disulfide bond links cysteine 97 and cysteine 189. A helical membrane pass occupies residues 101 to 120 (IFFIHAVGGTEMVLLIAMAF). The Cytoplasmic segment spans residues 121–139 (DRYVAICKPLHYLTIMNPQ). The helical transmembrane segment at 140–158 (RCILFLVISWIIGIIHSVI) threads the bilayer. The Extracellular segment spans residues 159–195 (QLAFVVDLLFCGPNELDSFFCDLPRFIKLACIETYTL). A helical transmembrane segment spans residues 196 to 219 (GFMVTANSGFISLASFLILIISYI). The Cytoplasmic segment spans residues 220–235 (FILVTVQKKSSGGIFK). The helical transmembrane segment at 236–258 (AFSMLSAHVIVVVLVFGPLIFFY) threads the bilayer. The Extracellular segment spans residues 259-269 (IFPFPTSHLDK). The helical transmembrane segment at 270–289 (FLAIFDAVITPVLNPVIYTF) threads the bilayer. Topologically, residues 290–312 (RNKEMMVAMRRRCSQFVNYSKIF) are cytoplasmic.

It belongs to the G-protein coupled receptor 1 family.

It localises to the cell membrane. Functionally, odorant receptor. The sequence is that of Olfactory receptor 4F6 (OR4F6) from Homo sapiens (Human).